We begin with the raw amino-acid sequence, 300 residues long: 7-methylguanosine phosphate-specific 5'-nucleotidase (300 aa).

D41 serves as the catalytic Nucleophile. Mg(2+) contacts are provided by D41 and D43. The active-site Proton donor is the D43. CMP is bound at residue E88. Position 88 (E88) interacts with N(7)-methyl-GMP. Substrate contacts are provided by residues 156–157 and K205; that span reads SA. D230 is a binding site for Mg(2+). K256 is subject to N6-acetyllysine.

This sequence belongs to the pyrimidine 5'-nucleotidase family. In terms of assembly, monomer.

It localises to the cytoplasm. The enzyme catalyses N(7)-methyl-GMP + H2O = N(7)-methylguanosine + phosphate. It catalyses the reaction CMP + H2O = cytidine + phosphate. It carries out the reaction a ribonucleoside 5'-phosphate + H2O = a ribonucleoside + phosphate. Specifically hydrolyzes 7-methylguanosine monophosphate (m(7)GMP) to 7-methylguanosine and inorganic phosphate. The specific activity for m(7)GMP may protect cells against undesired salvage of m(7)GMP and its incorporation into nucleic acids. Also has weak activity for CMP. UMP and purine nucleotides are poor substrates. This Rattus norvegicus (Rat) protein is 7-methylguanosine phosphate-specific 5'-nucleotidase (Nt5c3b).